Here is a 1199-residue protein sequence, read N- to C-terminus: DNA-directed RNA polymerase subunit beta' (1199 aa).

Cysteine 60, cysteine 62, cysteine 75, and cysteine 78 together coordinate Zn(2+). The Mg(2+) site is built by aspartate 449, aspartate 451, and aspartate 453. Residues cysteine 818, cysteine 892, cysteine 899, and cysteine 902 each contribute to the Zn(2+) site.

Belongs to the RNA polymerase beta' chain family. In terms of assembly, the RNAP catalytic core consists of 2 alpha, 1 beta, 1 beta' and 1 omega subunit. When a sigma factor is associated with the core the holoenzyme is formed, which can initiate transcription. Mg(2+) is required as a cofactor. The cofactor is Zn(2+).

It carries out the reaction RNA(n) + a ribonucleoside 5'-triphosphate = RNA(n+1) + diphosphate. Functionally, DNA-dependent RNA polymerase catalyzes the transcription of DNA into RNA using the four ribonucleoside triphosphates as substrates. The sequence is that of DNA-directed RNA polymerase subunit beta' from Bacillus velezensis (strain DSM 23117 / BGSC 10A6 / LMG 26770 / FZB42) (Bacillus amyloliquefaciens subsp. plantarum).